The sequence spans 133 residues: Small ribosomal subunit protein uS8 (133 aa).

A disordered region spans residues 1-28; the sequence is MANHDPISDMLTRIRNASEKRHEKTKVP. The segment covering 16–26 has biased composition (basic and acidic residues); sequence NASEKRHEKTK.

This sequence belongs to the universal ribosomal protein uS8 family. In terms of assembly, part of the 30S ribosomal subunit. Contacts proteins S5 and S12.

One of the primary rRNA binding proteins, it binds directly to 16S rRNA central domain where it helps coordinate assembly of the platform of the 30S subunit. This Prochlorococcus marinus (strain NATL1A) protein is Small ribosomal subunit protein uS8.